An 86-amino-acid chain; its full sequence is Kappa-theraphotoxin-Cg1a 6 (86 aa).

Residues 1 to 21 (MKVSVLITLAVLGVMFVWASA) form the signal peptide. The propeptide occupies 22–50 (AELEERGSDQRDSPAWLKSMERIFQSEER). Disulfide bonds link cysteine 52-cysteine 66, cysteine 59-cysteine 71, and cysteine 65-cysteine 78. Phenylalanine 84 is modified (phenylalanine amide).

The protein belongs to the neurotoxin 10 (Hwtx-1) family. 28 (Jztx-11) subfamily. Expressed by the venom gland.

It is found in the secreted. This toxin acts as a voltage-dependent gating-modifier. It inhibits the sodium conductance (IC(50)=124 nM) and slows the fast inactivation (EC(50)=1180 nM) of Nav1.5/SCN5A. It significantly shifts the activation to more depolarized voltages and decreases the deactivation of Nav1.5 currents upon extreme depolarization, but only slightly affects voltage-dependence of steady-state inactivation. In addition, this toxin causes an approximately five-fold decrease in the rate of recovery from inactivation and an approximately 1.9-fold reduction in the closed-state inactivation rate. This toxin integrates the functions of site 3 toxins (alpha-scorpion toxins) with site 4 toxins (beta-scorpion and spider toxins) by targeting multiple sites on Nav1.5. Also shows inhibition of voltage-gated potassium channels (5 uM completely inhibits Kv2.1/KCNB1, whereas 5 uM moderately inhibits Kv4.2/KCND2 Kv4.1/KCND1 channels). In Chilobrachys guangxiensis (Chinese earth tiger tarantula), this protein is Kappa-theraphotoxin-Cg1a 6.